Here is a 451-residue protein sequence, read N- to C-terminus: Alpha-galactosidase (451 aa).

5–71 (PKITFIGAGS…ASGRITCHTN (67 aa)) contacts NAD(+). Substrate is bound at residue Asn-151. Residue Cys-173 coordinates Mn(2+). His-174 functions as the Proton donor in the catalytic mechanism. Residue His-203 participates in Mn(2+) binding. Arg-287 provides a ligand contact to substrate.

Belongs to the glycosyl hydrolase 4 family. In terms of assembly, homodimer. Mn(2+) is required as a cofactor. NAD(+) serves as cofactor.

It catalyses the reaction Hydrolysis of terminal, non-reducing alpha-D-galactose residues in alpha-D-galactosides, including galactose oligosaccharides, galactomannans and galactolipids.. The polypeptide is Alpha-galactosidase (melA) (Salmonella typhimurium (strain LT2 / SGSC1412 / ATCC 700720)).